Consider the following 412-residue polypeptide: Phosphoglycerate kinase (412 aa).

Residues 22-24 (DFN), arginine 37, 60-63 (HLGK), arginine 120, and arginine 172 each bind substrate. ATP contacts are provided by residues lysine 223, glycine 310, glutamate 341, and 368 to 371 (GGDS).

This sequence belongs to the phosphoglycerate kinase family. As to quaternary structure, monomer.

The protein resides in the cytoplasm. The enzyme catalyses (2R)-3-phosphoglycerate + ATP = (2R)-3-phospho-glyceroyl phosphate + ADP. It functions in the pathway carbohydrate degradation; glycolysis; pyruvate from D-glyceraldehyde 3-phosphate: step 2/5. The protein is Phosphoglycerate kinase of Spiroplasma citri.